We begin with the raw amino-acid sequence, 62 residues long: Temporin-HN1 (62 aa).

An N-terminal signal peptide occupies residues 1–22 (MFTLKKSLLLLLFLGTINLSLS). The propeptide occupies 23-44 (EQERNAEEERRDDPEEMDAEVE). The residue at position 60 (Leu-60) is a Leucine amide.

Expressed by the skin glands.

It localises to the secreted. Functionally, has antimicrobial activity against some Gram-positive bacteria and fungi but has no activity against a range of Gram-negative bacteria except P.faecalis. Active against the Gram-positive bacteria S.aureus ATCC 25923 (MIC=37.5 uM), S.carnosus KHS (MIC=37.5 uM), B.licheniformis X39 (MIC=19 uM), R.rhodochrous X15 (MIC=4.8 uM), is virtually inactive against E.faecalis 981 (MIC=150 uM) and inactive against E.faecium 091299. Has some antimicrobial activity against the Gram-negative bacterium P.faecalis X29 (MIC=75 uM) and is inactive against E.coli, P.aeruginosa and S.typhi. Has antifungal activity against C.albicans ATCC 2002 (MIC=19 uM) and lower activity against the slime mold 090223 (MIC=75 uM). Has low hemolytic activity against human erythrocytes (LC(50)=75 uM). This chain is Temporin-HN1, found in Odorrana hainanensis (Odor frog).